Consider the following 207-residue polypeptide: MPLPDFRLIRLLPLAALVLTACSVTTPKGPGKSPDSPQWRQHQQDVRNLNQYQTRGAFAYISDQQKVYARFFWQQTGQDRYRLLLTNPLGSTELELNAQPGNVQLVDNKGQRYTSDDAEEMIGKLTGMPIPLNSLRQWILGLPGDATDYKLDDQYRLSEITYSQNGKNWKVVYGGYDTKTQPAMPANMELTDGGQRIKLKMDNWIVK.

Positions 1–21 (MPLPDFRLIRLLPLAALVLTA) are cleaved as a signal peptide. Cys-22 carries the N-palmitoyl cysteine lipid modification. Residue Cys-22 is the site of S-diacylglycerol cysteine attachment.

Belongs to the LolB family. Monomer.

It localises to the cell outer membrane. Plays a critical role in the incorporation of lipoproteins in the outer membrane after they are released by the LolA protein. This chain is Outer-membrane lipoprotein LolB, found in Escherichia coli (strain SMS-3-5 / SECEC).